A 187-amino-acid chain; its full sequence is Dirigent protein 23 (187 aa).

A signal peptide spans 1-24 (MAKEEYVSRMLVMLIMIMPLVAQG). Asn-182 carries an N-linked (GlcNAc...) asparagine glycan.

This sequence belongs to the plant dirigent protein family. Homodimer.

Its subcellular location is the secreted. The protein resides in the extracellular space. It is found in the apoplast. In terms of biological role, dirigent proteins impart stereoselectivity on the phenoxy radical-coupling reaction, yielding optically active lignans from two molecules of coniferyl alcohol in the biosynthesis of lignans, flavonolignans, and alkaloids and thus plays a central role in plant secondary metabolism. The protein is Dirigent protein 23 (DIR23) of Arabidopsis thaliana (Mouse-ear cress).